The following is a 383-amino-acid chain: Succinyl-diaminopimelate desuccinylase (383 aa).

Residue His73 coordinates Zn(2+). The active site involves Asp75. Asp107 contacts Zn(2+). The active-site Proton acceptor is the Glu141. Residues Glu142, Glu170, and His356 each contribute to the Zn(2+) site.

This sequence belongs to the peptidase M20A family. DapE subfamily. In terms of assembly, homodimer. Requires Zn(2+) as cofactor. Co(2+) serves as cofactor.

It carries out the reaction N-succinyl-(2S,6S)-2,6-diaminopimelate + H2O = (2S,6S)-2,6-diaminopimelate + succinate. It participates in amino-acid biosynthesis; L-lysine biosynthesis via DAP pathway; LL-2,6-diaminopimelate from (S)-tetrahydrodipicolinate (succinylase route): step 3/3. Functionally, catalyzes the hydrolysis of N-succinyl-L,L-diaminopimelic acid (SDAP), forming succinate and LL-2,6-diaminopimelate (DAP), an intermediate involved in the bacterial biosynthesis of lysine and meso-diaminopimelic acid, an essential component of bacterial cell walls. The protein is Succinyl-diaminopimelate desuccinylase of Pseudomonas putida (strain W619).